We begin with the raw amino-acid sequence, 1226 residues long: Chromosome partition protein Smc (1226 aa).

32 to 39 (PNGCGKSN) is a binding site for ATP. Coiled coils occupy residues 173–231 (ITKF…IKRN) and 269–491 (NSLE…SKSL). In terms of domain architecture, SMC hinge spans 527 to 635 (YQLLGNLIQC…FDGYFIASKF (109 aa)). Coiled-coil stretches lie at residues 679-741 (QGVV…AAKK), 775-965 (MLES…LREA), and 1006-1078 (HRRY…KSKE).

It belongs to the SMC family. In terms of assembly, homodimer.

It localises to the cytoplasm. Functionally, required for chromosome condensation and partitioning. This chain is Chromosome partition protein Smc, found in Halobacteriovorax marinus (strain ATCC BAA-682 / DSM 15412 / SJ) (Bacteriovorax marinus).